Reading from the N-terminus, the 385-residue chain is MSDIEKEENKDSSPPTTPPTGGPTKNNDIDDDEKENKIERSLTENLNKRFYNNNNNNSNNSNGEEIEDIDYKNFKTIKEFGYYYNDKGELRSIEGEEKFKFINQQQYDRLGDIIVKTIQNKMKSEPINLEEHWIPKGETNQCNIFTSKDFFENPTKLMVFINGSGAVKSGQWARSLCINDTLNTGSILPYLNDAISNDFSIIVLNPNYNVFEERIIEEGEEQKEKAKEEEEKKDDNGKLLKKKRVDNSIKGSENSNNHILTVYDEFIKKSPAKEIVIVAHSFGGVNTTYLLDNRGEEIADRLKSIAFTDSVHSLSPKSSSFTKSFFADENKTKNWVKSDKKLNTDLGFSKLQGCNIASSGHRVHEFTSSACRVPLFQFILNSLKK.

2 disordered regions span residues 1-65 (MSDI…NGEE) and 220-239 (EEQKEKAKEEEEKKDDNGKL). Residues 52 to 62 (NNNNNNSNNSN) show a composition bias toward low complexity. The span at 220–238 (EEQKEKAKEEEEKKDDNGK) shows a compositional bias: basic and acidic residues.

It belongs to the ARB2A family.

The sequence is that of Cotranscriptional regulator ARB2A homolog from Dictyostelium discoideum (Social amoeba).